The sequence spans 60 residues: MAQLRVTQIKSKISEKQNQRDTLRSLGLRRIGAVVVREDNAQNRGYVNTVAHLVKVEEID.

This sequence belongs to the universal ribosomal protein uL30 family. As to quaternary structure, part of the 50S ribosomal subunit.

The protein is Large ribosomal subunit protein uL30 of Clavibacter michiganensis subsp. michiganensis (strain NCPPB 382).